Consider the following 3014-residue polypeptide: Cadherin EGF LAG seven-pass G-type receptor 1 (3014 aa).

Positions 1-20 (MAPPPPPVLPVLLLLAAAAA) are cleaved as a signal peptide. Topologically, residues 22 to 2469 (PAMGLRAAAW…RENGEVLPLK (2448 aa)) are extracellular. Residues 205–242 (AGTPSASPSPSPPLPPNLPEARAGPARRARRGTSGRGS) form a disordered region. Over residues 211-222 (SPSPSPPLPPNL) the composition is skewed to pro residues. Cadherin domains lie at 246–353 (PMPN…SPVF), 354–459 (EQSE…YPQF), 460–565 (SEQN…EPIF), 566–687 (VSSP…DPVF), 688–789 (TQPT…RPVF), 790–892 (QSSH…APQF), 893–999 (LWDF…APMF), 1000–1101 (EKDE…PPVL), and 1106–1224 (ILFN…SPLL). N-linked (GlcNAc...) asparagine glycosylation is found at Asn403, Asn546, Asn634, and Asn778. N-linked (GlcNAc...) asparagine glycans are attached at residues Asn1114, Asn1139, Asn1213, Asn1249, Asn1259, and Asn1287. In terms of domain architecture, EGF-like 1; calcium-binding spans 1303–1361 (DDNICLREPCENYMKCVSVLRFDSSAPFLSSTTVLFRPIHPINGLRCRCPPGFTGDYCE). Disulfide bonds link Cys1307-Cys1318, Cys1312-Cys1349, Cys1351-Cys1360, Cys1367-Cys1378, Cys1372-Cys1387, Cys1389-Cys1398, Cys1407-Cys1418, Cys1412-Cys1428, and Cys1430-Cys1440. In terms of domain architecture, EGF-like 2; calcium-binding spans 1363–1399 (EIDLCYSDPCGANGRCRSREGGYTCECFEDFTGEHCE). An EGF-like 3; calcium-binding domain is found at 1403-1441 (RSGRCANGVCKNGGTCVNLLIGGFHCVCPPGEYERPYCE). The 205-residue stretch at 1442 to 1646 (VTTRSFPPQS…IANNGTREGC (205 aa)) folds into the Laminin G-like 1 domain. Asn1576, Asn1623, and Asn1640 each carry an N-linked (GlcNAc...) asparagine glycan. Disulfide bonds link Cys1620–Cys1646, Cys1653–Cys1664, Cys1658–Cys1673, Cys1675–Cys1684, Cys1840–Cys1870, Cys1876–Cys1887, Cys1881–Cys1896, Cys1898–Cys1907, Cys1911–Cys1922, Cys1916–Cys1934, Cys1936–Cys1945, Cys1953–Cys1966, and Cys1968–Cys1978. The 37-residue stretch at 1649 to 1685 (RRNFCDGRRCQNGGTCVNRWNMYLCECPLRFGGKNCE) folds into the EGF-like 4; calcium-binding domain. A (3R)-3-hydroxyasparagine modification is found at Asn1666. The 182-residue stretch at 1689 to 1870 (PHPQLFSGES…ALKVRVKDGC (182 aa)) folds into the Laminin G-like 2 domain. The EGF-like 5; calcium-binding domain occupies 1872 to 1907 (VDDPCTSSPCPPNSRCHDAWEDYSCVCDKGYLGINC). Asp1889 carries the post-translational modification (3R)-3-hydroxyaspartate. An EGF-like 6; calcium-binding domain is found at 1908 to 1946 (VDACHLNPCENMGACVRSPGSPQGYVCECGPSHYGPYCE). Residues 1947–1979 (NKLDLPCPRGWWGNPVCGPCHCAVSKGFDPDCN) enclose the EGF-like 7; calcium-binding domain. N-linked (GlcNAc...) asparagine glycosylation is present at Asn1979. Residues 1981-2016 (TNGQCQCKENYYKLLAQDTCLPCDCFPHGSHSRTCD) form the EGF-like 8; calcium-binding domain. 5 cysteine pairs are disulfide-bonded: Cys1985-Cys2000, Cys1987-Cys2003, Cys2005-Cys2015, Cys2024-Cys2033, and Cys2036-Cys2048. The 48-residue stretch at 2003-2050 (CDCFPHGSHSRTCDMATGQCACKPGVIGRQCNRCDNPFAEVTTLGCEV) folds into the Laminin EGF-like domain. N-linked (GlcNAc...) asparagine glycosylation is found at Asn2103, Asn2122, and Asn2257. The interval 2291-2328 (PEEKEGPLLRPAGRRTTPQTTRPGPGTEREAPISRRRR) is disordered. Positions 2297 to 2461 (PLLRPAGRRT…AVLMDISRRE (165 aa)) constitute a GAIN-B domain. The span at 2300-2316 (RPAGRRTTPQTTRPGPG) shows a compositional bias: low complexity. 2 disulfide bridges follow: Cys2411-Cys2443 and Cys2431-Cys2445. Positions 2411–2461 (CVFWNHSLAVGGTGGWSARGCELLSRNRTHVACQCSHTASFAVLMDISRRE) are GPS. Asn2415 and Asn2437 each carry an N-linked (GlcNAc...) asparagine glycan. A helical membrane pass occupies residues 2470–2490 (IVTYAAVSLSLAALLVAFVLL). Residues 2491-2501 (SLVRMLRSNLH) are Cytoplasmic-facing. The helical transmembrane segment at 2502-2522 (SIHKHLAVALFLSQLVFVIGI) threads the bilayer. Asn2523 carries an N-linked (GlcNAc...) asparagine glycan. At 2523 to 2527 (NQTEN) the chain is on the extracellular side. A helical transmembrane segment spans residues 2528–2548 (PFLCTVVAILLHYIYMSTFAW). The Cytoplasmic portion of the chain corresponds to 2549-2572 (TLVESLHVYRMLTEVRNIDTGPMR). A helical membrane pass occupies residues 2573 to 2593 (FYYVVGWGIPAIVTGLAVGLD). Over 2594–2611 (PQGYGNPDFCWLSLQDTL) the chain is Extracellular. Residues 2612–2632 (IWSFAGPIGAVIIINTVTSVL) form a helical membrane-spanning segment. The Cytoplasmic portion of the chain corresponds to 2633–2655 (SAKVSCQRKHHYYGKKGIVSLLR). The helical transmembrane segment at 2656-2676 (TAFLLLLLISATWLLGLLAVN) threads the bilayer. Residues 2677 to 2683 (RDALSFH) lie on the Extracellular side of the membrane. Residues 2684-2704 (YLFAIFSGLQGPFVLLFHCVL) form a helical membrane-spanning segment. Over 2705–3014 (NQEVRKHLKG…QADGSDSEKP (310 aa)) the chain is Cytoplasmic. Phosphoserine occurs at positions 2761 and 2764. Disordered regions lie at residues 2777-2939 (SSGL…PPPL) and 2954-3014 (LADC…SEKP). Basic and acidic residues predominate over residues 2796 to 2806 (SCKDPPGHDSD). The span at 2814-2825 (DEQSSSYASSHS) shows a compositional bias: low complexity. Ser2871 and Ser2873 each carry phosphoserine. A compositionally biased stretch (basic and acidic residues) spans 2876 to 2904 (PSGKPRLKVETKVSVELHREEQGSHRGEY). A compositionally biased stretch (low complexity) spans 2960–2969 (SPTSSRTSSL). Positions 2983-2992 (PGREPGRDHL) are enriched in basic and acidic residues.

This sequence belongs to the G-protein coupled receptor 2 family. LN-TM7 subfamily. The iron and 2-oxoglutarate dependent 3-hydroxylation of aspartate and asparagine is (R) stereospecific within EGF domains.

The protein localises to the cell membrane. Receptor that may have an important role in cell/cell signaling during nervous system formation. This is Cadherin EGF LAG seven-pass G-type receptor 1 (CELSR1) from Homo sapiens (Human).